Reading from the N-terminus, the 361-residue chain is Peptide chain release factor 1 (361 aa).

Residue glutamine 238 is modified to N5-methylglutamine.

This sequence belongs to the prokaryotic/mitochondrial release factor family. Methylated by PrmC. Methylation increases the termination efficiency of RF1.

Its subcellular location is the cytoplasm. Peptide chain release factor 1 directs the termination of translation in response to the peptide chain termination codons UAG and UAA. This is Peptide chain release factor 1 from Mesomycoplasma hyopneumoniae (strain 7448) (Mycoplasma hyopneumoniae).